A 412-amino-acid polypeptide reads, in one-letter code: uncharacterized protein (412 aa).

A signal peptide spans 1 to 21 (MIIPMLRILLIVLFVLNLVTS). 3 disordered regions span residues 85-134 (QPPA…STTT), 250-294 (STTE…TPGT), and 327-357 (VELG…HVRE). The segment covering 88–105 (ASLTSLPAAPPSAQVAPP) has biased composition (low complexity). Over residues 124–134 (TPQASISSTTT) the composition is skewed to polar residues. 2 stretches are compositionally biased toward low complexity: residues 250–259 (STTENTTEQS) and 266–293 (TTST…GTPG). Over residues 330-347 (GEGDDDEENDDDSSEEEE) the composition is skewed to acidic residues. A compositionally biased stretch (basic and acidic residues) spans 348-357 (TKPPARHVRE). Residues 371–408 (CDEEEDDKGKICKLWAAGGLCGTHKPTMFLFCRKTCLC) form the ShKT domain.

This is an uncharacterized protein from Caenorhabditis elegans.